The sequence spans 115 residues: Aspartate 1-decarboxylase (115 aa).

The Schiff-base intermediate with substrate; via pyruvic acid role is filled by serine 25. Pyruvic acid (Ser) is present on serine 25. Threonine 57 is a substrate binding site. The active-site Proton donor is tyrosine 58. Residue 71 to 73 (GAA) coordinates substrate.

This sequence belongs to the PanD family. As to quaternary structure, heterooctamer of four alpha and four beta subunits. Pyruvate serves as cofactor. Post-translationally, is synthesized initially as an inactive proenzyme, which is activated by self-cleavage at a specific serine bond to produce a beta-subunit with a hydroxyl group at its C-terminus and an alpha-subunit with a pyruvoyl group at its N-terminus.

Its subcellular location is the cytoplasm. It carries out the reaction L-aspartate + H(+) = beta-alanine + CO2. Its pathway is cofactor biosynthesis; (R)-pantothenate biosynthesis; beta-alanine from L-aspartate: step 1/1. Functionally, catalyzes the pyruvoyl-dependent decarboxylation of aspartate to produce beta-alanine. This chain is Aspartate 1-decarboxylase, found in Campylobacter concisus (strain 13826).